A 129-amino-acid chain; its full sequence is Glycine cleavage system H protein (129 aa).

A Lipoyl-binding domain is found at 24–106 (LFKIGVSEFA…IGDGWLLIIK (83 aa)). K65 carries the N6-lipoyllysine modification.

It belongs to the GcvH family. In terms of assembly, the glycine cleavage system is composed of four proteins: P, T, L and H. (R)-lipoate serves as cofactor.

Functionally, the glycine cleavage system catalyzes the degradation of glycine. The H protein shuttles the methylamine group of glycine from the P protein to the T protein. This Prochlorococcus marinus subsp. pastoris (strain CCMP1986 / NIES-2087 / MED4) protein is Glycine cleavage system H protein.